We begin with the raw amino-acid sequence, 334 residues long: tRNA N6-adenosine threonylcarbamoyltransferase (334 aa).

2 residues coordinate Fe cation: H112 and H116. Substrate contacts are provided by residues 135–139 (VVSGG), D168, G181, D185, and N274. Residue D303 coordinates Fe cation.

Belongs to the KAE1 / TsaD family. Requires Fe(2+) as cofactor.

The protein localises to the cytoplasm. It catalyses the reaction L-threonylcarbamoyladenylate + adenosine(37) in tRNA = N(6)-L-threonylcarbamoyladenosine(37) in tRNA + AMP + H(+). In terms of biological role, required for the formation of a threonylcarbamoyl group on adenosine at position 37 (t(6)A37) in tRNAs that read codons beginning with adenine. Is involved in the transfer of the threonylcarbamoyl moiety of threonylcarbamoyl-AMP (TC-AMP) to the N6 group of A37, together with TsaE and TsaB. TsaD likely plays a direct catalytic role in this reaction. In Anaeromyxobacter dehalogenans (strain 2CP-1 / ATCC BAA-258), this protein is tRNA N6-adenosine threonylcarbamoyltransferase.